The following is a 360-amino-acid chain: Alanine racemase (360 aa).

Catalysis depends on lysine 34, which acts as the Proton acceptor; specific for D-alanine. Lysine 34 is subject to N6-(pyridoxal phosphate)lysine. A substrate-binding site is contributed by arginine 129. Residue tyrosine 254 is the Proton acceptor; specific for L-alanine of the active site. Position 302 (methionine 302) interacts with substrate.

The protein belongs to the alanine racemase family. It depends on pyridoxal 5'-phosphate as a cofactor.

The catalysed reaction is L-alanine = D-alanine. Its pathway is amino-acid biosynthesis; D-alanine biosynthesis; D-alanine from L-alanine: step 1/1. Catalyzes the interconversion of L-alanine and D-alanine. May also act on other amino acids. The protein is Alanine racemase (alr) of Pectobacterium carotovorum subsp. carotovorum (strain PC1).